The chain runs to 386 residues: GTPase Obg (386 aa).

The 159-residue stretch at 4 to 162 (SNFVDYVKIY…RTVILQLKLL (159 aa)) folds into the Obg domain. The disordered stretch occupies residues 18-44 (KGGRGSSHFRREKYIPKGGPDGGDGGR). Residues 163 to 329 (ADVGLVGFPN…LKDLLWKELN (167 aa)) form the OBG-type G domain. GTP contacts are provided by residues 169-176 (GFPNAGKS), 194-198 (FTTLE), 216-219 (DIPG), 283-286 (TKSD), and 310-312 (SSI). The Mg(2+) site is built by S176 and T196. Residues 357 to 386 (YIFPVDEDEDDPDEEYEEYWDDDEDEDTRK) form a disordered region.

The protein belongs to the TRAFAC class OBG-HflX-like GTPase superfamily. OBG GTPase family. In terms of assembly, monomer. Mg(2+) is required as a cofactor.

Its subcellular location is the cytoplasm. An essential GTPase which binds GTP, GDP and possibly (p)ppGpp with moderate affinity, with high nucleotide exchange rates and a fairly low GTP hydrolysis rate. Plays a role in control of the cell cycle, stress response, ribosome biogenesis and in those bacteria that undergo differentiation, in morphogenesis control. This Parabacteroides distasonis (strain ATCC 8503 / DSM 20701 / CIP 104284 / JCM 5825 / NCTC 11152) protein is GTPase Obg.